We begin with the raw amino-acid sequence, 145 residues long: METVFDYNQIKEIIPHRQPFLLIDRVVEYEEGQRCVAIKQVSGNEPFFQGHFPDYAVMPGVLITEALAQTGAVALLNSEQNKGKIALFAGIDKCRFKRQVTPGDTLTLEVEITKMRGPIGKGTAKATVDGQLACSCELTFAIQDV.

Residue His-51 is part of the active site.

This sequence belongs to the thioester dehydratase family. FabZ subfamily.

The protein localises to the cytoplasm. The catalysed reaction is a (3R)-hydroxyacyl-[ACP] = a (2E)-enoyl-[ACP] + H2O. Its function is as follows. Involved in unsaturated fatty acids biosynthesis. Catalyzes the dehydration of short chain beta-hydroxyacyl-ACPs and long chain saturated and unsaturated beta-hydroxyacyl-ACPs. The chain is 3-hydroxyacyl-[acyl-carrier-protein] dehydratase FabZ from Staphylococcus carnosus (strain TM300).